A 37-amino-acid polypeptide reads, in one-letter code: Potassium channel toxin alpha-KTx 2.19 (37 aa).

Disulfide bonds link cysteine 7–cysteine 28, cysteine 13–cysteine 33, and cysteine 17–cysteine 35.

Expressed by the venom gland.

It is found in the secreted. Its function is as follows. Inhibitor of voltage-gated potassium channels. This is Potassium channel toxin alpha-KTx 2.19 from Rhopalurus junceus (Caribbean blue scorpion).